The primary structure comprises 287 residues: Protein UL24 homolog (287 aa).

Disordered stretches follow at residues 1-33 (MARR…FSRR) and 254-287 (RVGK…DSNL). A compositionally biased stretch (basic residues) spans 16-33 (HRSRTRSKTAHHRKFSRR).

This sequence belongs to the herpesviridae UL24 family.

Its subcellular location is the virion. It is found in the host cytoplasm. The protein resides in the host nucleus. It localises to the host nucleolus. The protein localises to the host Golgi apparatus. Its function is as follows. May participate in nuclear egress of viral particles. Plays a role in the dispersal of several host nucleolar proteins including NCL/nucleolin and NPM1. Since deletion of host NCL/nucleolin negatively impact on nuclear egress, UL24 supposedly acts on this process through its effect on host nucleoli. This chain is Protein UL24 homolog, found in Infectious laryngotracheitis virus (strain Thorne V882) (ILTV).